The sequence spans 37 residues: Cytochrome b6-f complex subunit 5 (37 aa).

Residues 5 to 25 (LLSGIVLGLIVVTLSGLFYAA) form a helical membrane-spanning segment.

It belongs to the PetG family. The 4 large subunits of the cytochrome b6-f complex are cytochrome b6, subunit IV (17 kDa polypeptide, PetD), cytochrome f and the Rieske protein, while the 4 small subunits are PetG, PetL, PetM and PetN. The complex functions as a dimer.

The protein resides in the cellular thylakoid membrane. In terms of biological role, component of the cytochrome b6-f complex, which mediates electron transfer between photosystem II (PSII) and photosystem I (PSI), cyclic electron flow around PSI, and state transitions. PetG is required for either the stability or assembly of the cytochrome b6-f complex. The polypeptide is Cytochrome b6-f complex subunit 5 (Trichormus variabilis (strain ATCC 29413 / PCC 7937) (Anabaena variabilis)).